The following is a 1531-amino-acid chain: La-related protein Larp4B (1531 aa).

Low complexity predominate over residues 112–147 (HTHVAHQQQQQQQQQTIQQHLHQQQQQQSPHPAQHL). 2 disordered regions span residues 112–148 (HTHV…QHLT) and 239–263 (QLPA…EPNI). An HTH La-type RNA-binding domain is found at 262–351 (NIPLDKLKQM…RPNRKRCIII (90 aa)). Positions 348-423 (CIIILREISN…KPIMARIKPK (76 aa)) constitute an RRM domain. 6 disordered regions span residues 533–605 (PLPP…QGGN), 710–736 (AHSH…ASSS), 748–768 (TAPA…QQTQ), 791–1135 (QEAG…SNQQ), 1160–1211 (DVVR…TPAL), and 1251–1285 (ASSK…QPSQ). Over residues 565–578 (YNNNHRGNPNNVGG) the composition is skewed to low complexity. 2 stretches are compositionally biased toward low complexity: residues 754–768 (QPGQ…QQTQ) and 810–826 (SSNM…TSMS). The span at 860–884 (SSPSNPHPQQHLMSSSTGSNVQSAG) shows a compositional bias: polar residues. Positions 945 to 959 (ALSSQQQQHHLTTGT) are enriched in low complexity. The span at 966–975 (HHYHHHHHHN) shows a compositional bias: basic residues. The segment covering 983–1004 (NSGGLGVSSGGSGGGGSGGGSG) has biased composition (gly residues). Residues 1031 to 1045 (HQQQQQQQQQQQQQQ) are compositionally biased toward low complexity. Residues 1068–1086 (TSATAPHTPQATGGASLHN) are compositionally biased toward polar residues. Positions 1087 to 1115 (STTSSSSSTGLGQKQTLHQQQQQAPQQHQ) are enriched in low complexity. At S1123 the chain carries Phosphoserine. Over residues 1164-1173 (TGGGGGGGGK) the composition is skewed to gly residues. Over residues 1183–1200 (PQGQNQPHMAPNYQQHQP) the composition is skewed to polar residues. Over residues 1270 to 1280 (KSNKTEDEMHP) the composition is skewed to basic and acidic residues. Phosphoserine occurs at positions 1370 and 1413. 2 disordered regions span residues 1393-1418 (KAAA…TGSH) and 1450-1531 (GGAS…ANNS). Composition is skewed to polar residues over residues 1467-1477 (ATNTTQGSSAV) and 1502-1515 (QHYG…TNAN).

Probable RNA binding protein. Negatively regulates myc at the protein level, via an unknown mechanism, and may therefore have a role in growth. Has no effect on myc mRNA levels. This Drosophila melanogaster (Fruit fly) protein is La-related protein Larp4B.